A 503-amino-acid polypeptide reads, in one-letter code: 11-hydroxysugiol 20-monooxygenase (503 aa).

The helical transmembrane segment at 2–22 (QVLIVASLAFLAAWLVYSRWS) threads the bilayer. Cys-446 contacts heme.

It belongs to the cytochrome P450 family. It depends on heme as a cofactor. In terms of tissue distribution, highly expressed in roots.

The protein localises to the membrane. It catalyses the reaction 11-hydroxysugiol + reduced [NADPH--hemoprotein reductase] + O2 = 11,20-dihydroxysugiol + oxidized [NADPH--hemoprotein reductase] + H2O + H(+). The enzyme catalyses 11-hydroxyferruginol + reduced [NADPH--hemoprotein reductase] + O2 = 11,20-dihydroxyferruginol + oxidized [NADPH--hemoprotein reductase] + H2O + H(+). It participates in secondary metabolite biosynthesis; terpenoid biosynthesis. Monooxygenase that oxidizes 11-hydroxysugiol to produce 11,20-dihydroxysugiol. Can oxidize 11-hydroxyferruginol to produce 11,20-dihydroxyferruginol. These products are intermediates in tanshinone biosynthesis. The polypeptide is 11-hydroxysugiol 20-monooxygenase (Salvia miltiorrhiza (Chinese sage)).